The following is a 184-amino-acid chain: ATP synthase subunit b, chloroplastic (184 aa).

The helical transmembrane segment at L27–L49 threads the bilayer.

It belongs to the ATPase B chain family. In terms of assembly, F-type ATPases have 2 components, F(1) - the catalytic core - and F(0) - the membrane proton channel. F(1) has five subunits: alpha(3), beta(3), gamma(1), delta(1), epsilon(1). F(0) has four main subunits: a(1), b(1), b'(1) and c(10-14). The alpha and beta chains form an alternating ring which encloses part of the gamma chain. F(1) is attached to F(0) by a central stalk formed by the gamma and epsilon chains, while a peripheral stalk is formed by the delta, b and b' chains.

It localises to the plastid. The protein resides in the chloroplast thylakoid membrane. F(1)F(0) ATP synthase produces ATP from ADP in the presence of a proton or sodium gradient. F-type ATPases consist of two structural domains, F(1) containing the extramembraneous catalytic core and F(0) containing the membrane proton channel, linked together by a central stalk and a peripheral stalk. During catalysis, ATP synthesis in the catalytic domain of F(1) is coupled via a rotary mechanism of the central stalk subunits to proton translocation. Functionally, component of the F(0) channel, it forms part of the peripheral stalk, linking F(1) to F(0). The protein is ATP synthase subunit b, chloroplastic of Phaseolus vulgaris (Kidney bean).